The primary structure comprises 51 residues: Large ribosomal subunit protein bL33 (51 aa).

It belongs to the bacterial ribosomal protein bL33 family.

The protein is Large ribosomal subunit protein bL33 of Francisella tularensis subsp. tularensis (strain FSC 198).